The chain runs to 410 residues: Protein CNPPD1 (410 aa).

A helical transmembrane segment spans residues 233–253 (CLLAVAYVSSVALAVASVAVI).

The protein belongs to the CNPPD1 family.

It is found in the membrane. The sequence is that of Protein CNPPD1 (CNPPD1) from Pongo abelii (Sumatran orangutan).